Reading from the N-terminus, the 196-residue chain is Large ribosomal subunit protein eL15 (196 aa).

A disordered region spans residues 154–196 (PGHRGRSERGLTSAGVKGRGMRRRGKGTEKCRPSVRANANRAK).

This sequence belongs to the eukaryotic ribosomal protein eL15 family.

The protein is Large ribosomal subunit protein eL15 of Methanospirillum hungatei JF-1 (strain ATCC 27890 / DSM 864 / NBRC 100397 / JF-1).